A 921-amino-acid chain; its full sequence is Isoleucine--tRNA ligase 1 (921 aa).

The short motif at 57–67 is the 'HIGH' region element; it reads PYANGDIHMGH. L-isoleucyl-5'-AMP is bound at residue E552. A 'KMSKS' region motif is present at residues 593 to 597; the sequence is KMSKS. K596 is an ATP binding site. Positions 888, 891, 908, and 911 each coordinate Zn(2+).

The protein belongs to the class-I aminoacyl-tRNA synthetase family. IleS type 1 subfamily. In terms of assembly, monomer. Requires Zn(2+) as cofactor.

Its subcellular location is the cytoplasm. It catalyses the reaction tRNA(Ile) + L-isoleucine + ATP = L-isoleucyl-tRNA(Ile) + AMP + diphosphate. Its function is as follows. Catalyzes the attachment of isoleucine to tRNA(Ile). As IleRS can inadvertently accommodate and process structurally similar amino acids such as valine, to avoid such errors it has two additional distinct tRNA(Ile)-dependent editing activities. One activity is designated as 'pretransfer' editing and involves the hydrolysis of activated Val-AMP. The other activity is designated 'posttransfer' editing and involves deacylation of mischarged Val-tRNA(Ile). The polypeptide is Isoleucine--tRNA ligase 1 (Bacillus thuringiensis subsp. konkukian (strain 97-27)).